Consider the following 352-residue polypeptide: tRNA-specific 2-thiouridylase MnmA (352 aa).

Residues 7 to 14 and Leu-33 each bind ATP; that span reads GLSGGVDS. Catalysis depends on Cys-94, which acts as the Nucleophile. Residues Cys-94 and Cys-193 are joined by a disulfide bond. Residue Gly-119 participates in ATP binding. Residues 143-145 form an interaction with tRNA region; sequence KDQ. The Cysteine persulfide intermediate role is filled by Cys-193. The segment at 298-299 is interaction with tRNA; that stretch reads RY.

It belongs to the MnmA/TRMU family.

It is found in the cytoplasm. It catalyses the reaction S-sulfanyl-L-cysteinyl-[protein] + uridine(34) in tRNA + AH2 + ATP = 2-thiouridine(34) in tRNA + L-cysteinyl-[protein] + A + AMP + diphosphate + H(+). In terms of biological role, catalyzes the 2-thiolation of uridine at the wobble position (U34) of tRNA, leading to the formation of s(2)U34. In Trichormus variabilis (strain ATCC 29413 / PCC 7937) (Anabaena variabilis), this protein is tRNA-specific 2-thiouridylase MnmA.